The following is a 191-amino-acid chain: Ubiquinol-cytochrome c reductase iron-sulfur subunit (191 aa).

The helical transmembrane segment at 18–35 (ATAATGVVVTGAAVWPLI) threads the bilayer. Residues 94–189 (RDTSAENANK…AAFVDETTIK (96 aa)) enclose the Rieske domain. Positions 95–116 (DTSAENANKPGAEATDENRTLP) are disordered. 4 residues coordinate [2Fe-2S] cluster: C133, H135, C153, and H156. A disulfide bridge connects residues C138 and C155.

It belongs to the Rieske iron-sulfur protein family. In terms of assembly, the main subunits of complex b-c1 are: cytochrome b, cytochrome c1 and the Rieske protein. The cofactor is [2Fe-2S] cluster.

The protein resides in the cell membrane. The catalysed reaction is a quinol + 2 Fe(III)-[cytochrome c](out) = a quinone + 2 Fe(II)-[cytochrome c](out) + 2 H(+)(out). Component of the ubiquinol-cytochrome c reductase complex (complex III or cytochrome b-c1 complex), which is a respiratory chain that generates an electrochemical potential coupled to ATP synthesis. The chain is Ubiquinol-cytochrome c reductase iron-sulfur subunit (petA) from Rhodobacter capsulatus (strain ATCC BAA-309 / NBRC 16581 / SB1003).